A 435-amino-acid polypeptide reads, in one-letter code: Trigger factor (435 aa).

Positions 163 to 248 (GDTVTIDFDG…IHEIKTKELP (86 aa)) constitute a PPIase FKBP-type domain.

The protein belongs to the FKBP-type PPIase family. Tig subfamily.

Its subcellular location is the cytoplasm. It catalyses the reaction [protein]-peptidylproline (omega=180) = [protein]-peptidylproline (omega=0). Its function is as follows. Involved in protein export. Acts as a chaperone by maintaining the newly synthesized protein in an open conformation. Functions as a peptidyl-prolyl cis-trans isomerase. The polypeptide is Trigger factor (Pediococcus pentosaceus (strain ATCC 25745 / CCUG 21536 / LMG 10740 / 183-1w)).